The following is a 793-amino-acid chain: Endonuclease MutS2 (793 aa).

335-342 (GPNTGGKT) contacts ATP. The Smr domain maps to 718-793 (IDVRGYNLEE…ESGVTIVELR (76 aa)).

Belongs to the DNA mismatch repair MutS family. MutS2 subfamily. In terms of assembly, homodimer. Binds to stalled ribosomes, contacting rRNA.

In terms of biological role, endonuclease that is involved in the suppression of homologous recombination and thus may have a key role in the control of bacterial genetic diversity. Its function is as follows. Acts as a ribosome collision sensor, splitting the ribosome into its 2 subunits. Detects stalled/collided 70S ribosomes which it binds and splits by an ATP-hydrolysis driven conformational change. Acts upstream of the ribosome quality control system (RQC), a ribosome-associated complex that mediates the extraction of incompletely synthesized nascent chains from stalled ribosomes and their subsequent degradation. Probably generates substrates for RQC. The sequence is that of Endonuclease MutS2 from Acetivibrio thermocellus (strain ATCC 27405 / DSM 1237 / JCM 9322 / NBRC 103400 / NCIMB 10682 / NRRL B-4536 / VPI 7372) (Clostridium thermocellum).